Here is a 122-residue protein sequence, read N- to C-terminus: Protein MGF 110-6L (122 aa).

Residues 1–18 (MLVIFLGILGLMASQVLG) form the signal peptide. Asn-100 carries N-linked (GlcNAc...) asparagine; by host glycosylation. The Prevents secretion from ER motif lies at 119 to 122 (KDEL).

The protein belongs to the asfivirus MGF 110 family. In terms of processing, N-glycosylated.

Its subcellular location is the host endoplasmic reticulum lumen. In terms of biological role, plays a role in virus cell tropism, and may be required for efficient virus replication in macrophages. The protein is Protein MGF 110-6L of Ornithodoros (relapsing fever ticks).